Here is an 83-residue protein sequence, read N- to C-terminus: Mu-theraphotoxin-Hhn2k (83 aa).

Positions Met-1–Ala-21 are cleaved as a signal peptide. The propeptide occupies Ser-22–Arg-48. Disulfide bonds link Cys-50–Cys-65, Cys-57–Cys-70, and Cys-64–Cys-77. Leu-81 is subject to Leucine amide.

The protein belongs to the neurotoxin 10 (Hwtx-1) family. 15 (Hntx-3) subfamily. As to quaternary structure, monomer. Expressed by the venom gland.

The protein localises to the secreted. Lethal neurotoxin. Selectively blocks tetrodotoxin-sensitive voltage-gated sodium channels (Nav). Does not affect tetrodotoxin-resistant voltage-gated sodium channels or calcium channels. The polypeptide is Mu-theraphotoxin-Hhn2k (Cyriopagopus hainanus (Chinese bird spider)).